Consider the following 438-residue polypeptide: GTPase Der (438 aa).

EngA-type G domains follow at residues 4 to 168 and 177 to 352; these read PIVA…PEGN and IRIA…GNYC. GTP is bound by residues 10–17, 57–61, 120–123, 183–190, 230–234, and 295–298; these read GRPNVGKS, DTGGI, NKID, DTAGL, and NKWD. The region spanning 353 to 437 is the KH-like domain; the sequence is KRIKTGILND…GIKLEFRERK (85 aa).

It belongs to the TRAFAC class TrmE-Era-EngA-EngB-Septin-like GTPase superfamily. EngA (Der) GTPase family. As to quaternary structure, associates with the 50S ribosomal subunit.

Its function is as follows. GTPase that plays an essential role in the late steps of ribosome biogenesis. The chain is GTPase Der from Clostridium novyi (strain NT).